A 273-amino-acid polypeptide reads, in one-letter code: Hydroxyethylthiazole kinase (273 aa).

Substrate is bound at residue methionine 47. The ATP site is built by arginine 123 and threonine 169. Glycine 196 serves as a coordination point for substrate.

The protein belongs to the Thz kinase family. Requires Mg(2+) as cofactor.

The catalysed reaction is 5-(2-hydroxyethyl)-4-methylthiazole + ATP = 4-methyl-5-(2-phosphooxyethyl)-thiazole + ADP + H(+). The protein operates within cofactor biosynthesis; thiamine diphosphate biosynthesis; 4-methyl-5-(2-phosphoethyl)-thiazole from 5-(2-hydroxyethyl)-4-methylthiazole: step 1/1. Catalyzes the phosphorylation of the hydroxyl group of 4-methyl-5-beta-hydroxyethylthiazole (THZ). In Desulfotalea psychrophila (strain LSv54 / DSM 12343), this protein is Hydroxyethylthiazole kinase.